The following is a 220-amino-acid chain: MTKMAELKGSSFTLSALHLVDGDIKKATDYLKEKVNQAPNFFASAPVVIDITQAGREINFKQLKEDVKDAGMIPVGVSGCKDARMQNEAKSAGFAIMNAARQAKDMPVTVEPTRIIRTPVRSGQQIYAKNCDLVVMNHVSAGAEIIADGCIHVYGNLRGRAIAGASGQHQAQIFCQNIQSELISIAGNYWLSDKIKAEFWGKGVVISLAENNLNIEHLTL.

It belongs to the MinC family. In terms of assembly, interacts with MinD and FtsZ.

Functionally, cell division inhibitor that blocks the formation of polar Z ring septums. Rapidly oscillates between the poles of the cell to destabilize FtsZ filaments that have formed before they mature into polar Z rings. Prevents FtsZ polymerization. The protein is Probable septum site-determining protein MinC of Photobacterium profundum (strain SS9).